The chain runs to 526 residues: Meiotically up-regulated gene 99 protein, mitochondrial (526 aa).

2 consecutive transmembrane segments (helical) span residues 398–418 and 421–441; these read TLYTTAFQGLGALGSLYLYFV and FSLYNAFSVFSVCGVFGLYYL.

It localises to the mitochondrion membrane. Required for correct meiotic chromosome segregation. Appears to also have role in sporulation. The sequence is that of Meiotically up-regulated gene 99 protein, mitochondrial (mug99) from Schizosaccharomyces pombe (strain 972 / ATCC 24843) (Fission yeast).